A 402-amino-acid chain; its full sequence is Arginine biosynthesis bifunctional protein ArgJ (402 aa).

6 residues coordinate substrate: Thr152, Lys178, Thr189, Glu275, Asn397, and Thr402. The active-site Nucleophile is Thr189.

Belongs to the ArgJ family. Heterotetramer of two alpha and two beta chains.

The protein localises to the cytoplasm. It catalyses the reaction N(2)-acetyl-L-ornithine + L-glutamate = N-acetyl-L-glutamate + L-ornithine. It carries out the reaction L-glutamate + acetyl-CoA = N-acetyl-L-glutamate + CoA + H(+). It participates in amino-acid biosynthesis; L-arginine biosynthesis; L-ornithine and N-acetyl-L-glutamate from L-glutamate and N(2)-acetyl-L-ornithine (cyclic): step 1/1. The protein operates within amino-acid biosynthesis; L-arginine biosynthesis; N(2)-acetyl-L-ornithine from L-glutamate: step 1/4. In terms of biological role, catalyzes two activities which are involved in the cyclic version of arginine biosynthesis: the synthesis of N-acetylglutamate from glutamate and acetyl-CoA as the acetyl donor, and of ornithine by transacetylation between N(2)-acetylornithine and glutamate. This is Arginine biosynthesis bifunctional protein ArgJ from Lactiplantibacillus plantarum (strain ATCC BAA-793 / NCIMB 8826 / WCFS1) (Lactobacillus plantarum).